The following is a 597-amino-acid chain: Exochitinase 1 (597 aa).

Residues 1 to 29 (MDRFRPLAVLIAAALTLSGTTALSSAARA) constitute a signal peptide (or 32). The Fibronectin type-III domain occupies 172 to 253 (PPTGLRTGSV…ATVTATTAPG (82 aa)). Residues 264-597 (HALVGYLHAS…FQRTFDGYFG (334 aa)) form the GH18 domain. Glu384 (proton donor) is an active-site residue.

Belongs to the glycosyl hydrolase 18 family. Chitinase class II subfamily. Post-translationally, the N-terminus is blocked.

It carries out the reaction Random endo-hydrolysis of N-acetyl-beta-D-glucosaminide (1-&gt;4)-beta-linkages in chitin and chitodextrins.. With respect to regulation, inhibited by the pseudosugar allosamidin A. Exochitinase that generates exclusively chitobiose from chitotetraose, chitohexaose, and colloidal high-molecular mass chitin. This chain is Exochitinase 1 (chi01), found in Streptomyces olivaceoviridis (Streptomyces corchorusii).